The primary structure comprises 346 residues: Dimethyladenosine transferase 1, mitochondrial (346 aa).

Residues 1 to 27 (MATQGVLAKYRLPPLPTIGEIIKLFNL) constitute a mitochondrion transit peptide. S-adenosyl-L-methionine is bound by residues Asn36, Leu38, Gly63, Glu85, Lys86, Asp111, Ile112, and Asn141.

Belongs to the class I-like SAM-binding methyltransferase superfamily. rRNA adenine N(6)-methyltransferase family. KsgA subfamily.

Its subcellular location is the mitochondrion. It carries out the reaction adenosine(N)/adenosine(N+1) in rRNA + 4 S-adenosyl-L-methionine = N(6)-dimethyladenosine(N)/N(6)-dimethyladenosine(N+1) in rRNA + 4 S-adenosyl-L-homocysteine + 4 H(+). Mitochondrial methyltransferase which uses S-adenosyl methionine to dimethylate two highly conserved adjacent adenosine residues (A1583 and A1584) within the loop of helix 45 at the 3-prime end of 12S rRNA, thereby regulating the assembly or stability of the small subunit of the mitochondrial ribosome. Also required for basal transcription of mitochondrial DNA, probably via its interaction with POLRMT and TFAM. Stimulates transcription independently of the methyltransferase activity. This Xenopus tropicalis (Western clawed frog) protein is Dimethyladenosine transferase 1, mitochondrial (tfb1m).